The following is a 300-amino-acid chain: Ubiquitin carboxyl-terminal hydrolase 2 (300 aa).

Positions 2 to 220 constitute a UCH catalytic domain; sequence SWTTIESDAG…IRFNLMVICK (219 aa). Cys83 (nucleophile) is an active-site residue. The active-site Proton donor is His159. Positions 261–290 constitute a ULD domain; it reads NFVGLFVELSKLLVKDRIDKNTWNSTLETA.

The protein belongs to the peptidase C12 family. As to quaternary structure, component of the 26S proteasome. Interacts with rpn10.

The protein resides in the nucleus. The enzyme catalyses Thiol-dependent hydrolysis of ester, thioester, amide, peptide and isopeptide bonds formed by the C-terminal Gly of ubiquitin (a 76-residue protein attached to proteins as an intracellular targeting signal).. Functionally, ubiquitin-protein hydrolase is involved both in the processing of ubiquitin precursors and of ubiquitinated proteins. This enzyme is a thiol protease that recognizes and hydrolyzes a peptide bond at the C-terminal glycine of ubiquitin. The sequence is that of Ubiquitin carboxyl-terminal hydrolase 2 (uch2) from Schizosaccharomyces pombe (strain 972 / ATCC 24843) (Fission yeast).